The chain runs to 393 residues: 6-hydroxy-3-succinoylpyridine 3-monooxygenase HspB (393 aa).

Residues 6–35 (RVII…VLEA) and 277–287 (MRNGRVILIGD) each bind FAD.

The protein belongs to the PheA/TfdB FAD monooxygenase family. As to quaternary structure, homodimer. Requires FAD as cofactor.

The enzyme catalyses 4-(6-hydroxypyridin-3-yl)-4-oxobutanoate + 2 NADH + O2 + 2 H(+) = 2,5-dihydroxypyridine + succinate semialdehyde + 2 NAD(+) + H2O. It participates in alkaloid degradation; nicotine degradation. Inhibited by Cu(2+) and Zn(2+). Its function is as follows. Involved in the nicotine degradation. Catalyzes the cleavage of 6-hydroxy-3-succinoylpyridine (HSP) by incorporation of oxygen at the 3-position to produce to 2,5-dihydroxypyridine (DHP) and succinic semialdehyde. This Pseudomonas putida (strain DSM 28022 / S16) protein is 6-hydroxy-3-succinoylpyridine 3-monooxygenase HspB.